The following is a 260-amino-acid chain: Proansamycin X synthase (260 aa).

The active-site Acyl-thioester intermediate is C73. Residues H111 and D126 contribute to the active site.

This sequence belongs to the arylamine N-acetyltransferase family.

Its pathway is antibiotic biosynthesis; rifamycin B biosynthesis. Its function is as follows. Catalyzes the release of the completed linear polyketide from the rif PKS by forming an intramolecular amide bond, in this way terminating polyketide assembly and forming the macrocyclic compound proansamycin X, an intermediate in the rifamycin B biosynthesis. This Amycolatopsis mediterranei (strain S699) (Nocardia mediterranei) protein is Proansamycin X synthase (rifF).